The chain runs to 147 residues: Elongation factor Tu (147 aa).

Belongs to the GTP-binding elongation factor family. EF-Tu/EF-1A subfamily. Monomer.

The protein resides in the cytoplasm. In terms of biological role, this protein promotes the GTP-dependent binding of aminoacyl-tRNA to the A-site of ribosomes during protein biosynthesis. This Fructilactobacillus sanfranciscensis (Lactobacillus sanfranciscensis) protein is Elongation factor Tu (tuf).